The sequence spans 161 residues: Phosphopantetheine adenylyltransferase (161 aa).

Ser9 is a substrate binding site. ATP contacts are provided by residues 9-10 (SF) and His17. Positions 41, 73, and 87 each coordinate substrate. Residues 88-90 (GLR), Glu98, and 123-129 (YSYLSSS) contribute to the ATP site.

Belongs to the bacterial CoaD family. As to quaternary structure, homohexamer. The cofactor is Mg(2+).

It localises to the cytoplasm. It catalyses the reaction (R)-4'-phosphopantetheine + ATP + H(+) = 3'-dephospho-CoA + diphosphate. Its pathway is cofactor biosynthesis; coenzyme A biosynthesis; CoA from (R)-pantothenate: step 4/5. In terms of biological role, reversibly transfers an adenylyl group from ATP to 4'-phosphopantetheine, yielding dephospho-CoA (dPCoA) and pyrophosphate. The sequence is that of Phosphopantetheine adenylyltransferase from Clostridium novyi (strain NT).